A 509-amino-acid chain; its full sequence is Maturase K (509 aa).

Belongs to the intron maturase 2 family. MatK subfamily.

The protein localises to the plastid. It localises to the chloroplast. Its function is as follows. Usually encoded in the trnK tRNA gene intron. Probably assists in splicing its own and other chloroplast group II introns. The polypeptide is Maturase K (Portulaca oleracea (Common purslane)).